We begin with the raw amino-acid sequence, 161 residues long: Globin CTT-VIIB-10 (161 aa).

The first 16 residues, 1-16, serve as a signal peptide directing secretion; sequence MKFFAVLALCIVGAIA. In terms of domain architecture, Globin spans 18–161; it reads PLTADEASLV…NTFAIVVPRL (144 aa). Residues histidine 76 and histidine 111 each contribute to the heme b site.

The protein belongs to the globin family. Homodimer.

The chain is Globin CTT-VIIB-10 (CTT-7B10) from Chironomus thummi thummi (Midge).